The primary structure comprises 403 residues: Phosphopentomutase (403 aa).

Positions 13, 298, 303, 339, 340, and 351 each coordinate Mn(2+).

Belongs to the phosphopentomutase family. Mn(2+) serves as cofactor.

It is found in the cytoplasm. It catalyses the reaction 2-deoxy-alpha-D-ribose 1-phosphate = 2-deoxy-D-ribose 5-phosphate. The enzyme catalyses alpha-D-ribose 1-phosphate = D-ribose 5-phosphate. It functions in the pathway carbohydrate degradation; 2-deoxy-D-ribose 1-phosphate degradation; D-glyceraldehyde 3-phosphate and acetaldehyde from 2-deoxy-alpha-D-ribose 1-phosphate: step 1/2. In terms of biological role, isomerase that catalyzes the conversion of deoxy-ribose 1-phosphate (dRib-1-P) and ribose 1-phosphate (Rib-1-P) to deoxy-ribose 5-phosphate (dRib-5-P) and ribose 5-phosphate (Rib-5-P), respectively. This chain is Phosphopentomutase, found in Streptococcus pyogenes serotype M2 (strain MGAS10270).